A 179-amino-acid chain; its full sequence is Large ribosomal subunit protein uL5 (179 aa).

Belongs to the universal ribosomal protein uL5 family. In terms of assembly, part of the 50S ribosomal subunit; part of the 5S rRNA/L5/L18/L25 subcomplex. Contacts the 5S rRNA and the P site tRNA. Forms a bridge to the 30S subunit in the 70S ribosome.

In terms of biological role, this is one of the proteins that bind and probably mediate the attachment of the 5S RNA into the large ribosomal subunit, where it forms part of the central protuberance. In the 70S ribosome it contacts protein S13 of the 30S subunit (bridge B1b), connecting the 2 subunits; this bridge is implicated in subunit movement. Contacts the P site tRNA; the 5S rRNA and some of its associated proteins might help stabilize positioning of ribosome-bound tRNAs. This Bacillus licheniformis (strain ATCC 14580 / DSM 13 / JCM 2505 / CCUG 7422 / NBRC 12200 / NCIMB 9375 / NCTC 10341 / NRRL NRS-1264 / Gibson 46) protein is Large ribosomal subunit protein uL5.